Consider the following 62-residue polypeptide: UPF0339 protein Atu5359 (62 aa).

The protein belongs to the UPF0339 family.

The polypeptide is UPF0339 protein Atu5359 (Agrobacterium fabrum (strain C58 / ATCC 33970) (Agrobacterium tumefaciens (strain C58))).